An 848-amino-acid chain; its full sequence is Adenylate cyclase (848 aa).

The catalytic stretch occupies residues 1–535 (MYLYIETLKQ…DVSHHFPLRL (535 aa)). A regulatory region spans residues 541 to 848 (KALYSPCEIR…DTPLLQQYFS (308 aa)). His-609 is modified (phosphohistidine; by CRR).

It belongs to the adenylyl cyclase class-1 family.

Its subcellular location is the cytoplasm. It carries out the reaction ATP = 3',5'-cyclic AMP + diphosphate. Its activity is regulated as follows. The regulatory domain is involved in the regulation of cyclase activity by the carbon source. Activated by the PTS system, glucose-specific IIA component (CRR). Functionally, catalyzes the formation of the second messenger cAMP from ATP. Its transcript is probably degraded by endoribonuclease LS (rnlA), decreasing cAMP levels and the negative regulator Crp-cAMP, which then induces its own transcription again. This chain is Adenylate cyclase (cyaA), found in Escherichia coli (strain K12).